Consider the following 334-residue polypeptide: Ethanol acetyltransferase 1 (334 aa).

The transit peptide at methionine 1–phenylalanine 16 directs the protein to the mitochondrion. Residues serine 124, aspartate 148, and histidine 296 each act as charge relay system in the active site.

It belongs to the AB hydrolase superfamily.

It is found in the mitochondrion. It catalyses the reaction ethanol + acetyl-CoA = ethyl acetate + CoA. The catalysed reaction is acetyl-CoA + H2O = acetate + CoA + H(+). The enzyme catalyses ethyl acetate + H2O = ethanol + acetate + H(+). In terms of biological role, alcohol acetyltransferase that catalyzes the synthesis of ethyl acetate from ethanol and acetyl-CoA. Can also function as a thioesterase by hydrolyzing acetyl-CoA in the absence of ethanol, as well as esterase hydrolyzing ethyl acetate. In Hanseniaspora uvarum (Yeast), this protein is Ethanol acetyltransferase 1 (EAT1).